A 418-amino-acid chain; its full sequence is Serine hydroxymethyltransferase (418 aa).

(6S)-5,6,7,8-tetrahydrofolate is bound by residues Leu121 and 125–127; that span reads GHL. An N6-(pyridoxal phosphate)lysine modification is found at Lys230. Residue 356–358 participates in (6S)-5,6,7,8-tetrahydrofolate binding; it reads SPF.

It belongs to the SHMT family. Homodimer. The cofactor is pyridoxal 5'-phosphate.

Its subcellular location is the cytoplasm. It carries out the reaction (6R)-5,10-methylene-5,6,7,8-tetrahydrofolate + glycine + H2O = (6S)-5,6,7,8-tetrahydrofolate + L-serine. Its pathway is one-carbon metabolism; tetrahydrofolate interconversion. The protein operates within amino-acid biosynthesis; glycine biosynthesis; glycine from L-serine: step 1/1. In terms of biological role, catalyzes the reversible interconversion of serine and glycine with tetrahydrofolate (THF) serving as the one-carbon carrier. This reaction serves as the major source of one-carbon groups required for the biosynthesis of purines, thymidylate, methionine, and other important biomolecules. Also exhibits THF-independent aldolase activity toward beta-hydroxyamino acids, producing glycine and aldehydes, via a retro-aldol mechanism. This is Serine hydroxymethyltransferase from Alteromonas mediterranea (strain DSM 17117 / CIP 110805 / LMG 28347 / Deep ecotype).